The primary structure comprises 176 residues: NAD(P)H-quinone oxidoreductase subunit 6, chloroplastic (176 aa).

A run of 5 helical transmembrane segments spans residues 10–30, 32–52, 61–81, 92–112, and 152–172; these read FLLVFLGLGLILGGLGVVLLA, PIYSAFSLGLVFVCISLFYIL, AQLLIYVGAINVLIIFAVMFI, LWTVGDGVTSVVCTSLFVSLI, and FFIPFEFISIILLVALIGAIA.

The protein belongs to the complex I subunit 6 family. In terms of assembly, NDH is composed of at least 16 different subunits, 5 of which are encoded in the nucleus.

It localises to the plastid. It is found in the chloroplast thylakoid membrane. It carries out the reaction a plastoquinone + NADH + (n+1) H(+)(in) = a plastoquinol + NAD(+) + n H(+)(out). The enzyme catalyses a plastoquinone + NADPH + (n+1) H(+)(in) = a plastoquinol + NADP(+) + n H(+)(out). In terms of biological role, NDH shuttles electrons from NAD(P)H:plastoquinone, via FMN and iron-sulfur (Fe-S) centers, to quinones in the photosynthetic chain and possibly in a chloroplast respiratory chain. The immediate electron acceptor for the enzyme in this species is believed to be plastoquinone. Couples the redox reaction to proton translocation, and thus conserves the redox energy in a proton gradient. The sequence is that of NAD(P)H-quinone oxidoreductase subunit 6, chloroplastic (ndhG) from Helianthus annuus (Common sunflower).